A 246-amino-acid chain; its full sequence is uncharacterized protein (246 aa).

This is an uncharacterized protein from Acanthamoeba polyphaga (Amoeba).